A 369-amino-acid chain; its full sequence is Tyrosinase-like protein orsC (369 aa).

An N-terminal signal peptide occupies residues 1-23 (MLAFNPLVTALAALIFLFCQANA). Positions 112 and 121 each coordinate Cu cation. N-linked (GlcNAc...) asparagine glycans are attached at residues asparagine 165, asparagine 179, asparagine 253, and asparagine 272. Histidine 315 is a Cu cation binding site.

It participates in secondary metabolite biosynthesis. Its function is as follows. Tyrosinase-like protein; part of the gene cluster that mediates the biosynthesis of orsellinic acid, as well as of the cathepsin K inhibitors F9775 A and F9775 B. The non-reducing polyketide synthase orsA produces orsellinic acid by condensing acetyl-CoA with 3 malonyl-CoA units. Further modifications by the decarboxylase orsB and the tyrosinase-like protein orsC lead to the production of F9775 A and F9775 B. The functions of orsD and orsE remain unclear since only orsB and orsC are required to convert orsellinic acid into F9775 A and F9775 B. The sequence is that of Tyrosinase-like protein orsC from Emericella nidulans (strain FGSC A4 / ATCC 38163 / CBS 112.46 / NRRL 194 / M139) (Aspergillus nidulans).